A 133-amino-acid polypeptide reads, in one-letter code: Mediator of RNA polymerase II transcription subunit 10 (133 aa).

Belongs to the Mediator complex subunit 10 family. As to quaternary structure, component of the Mediator complex. Interacts with MED4 and MED21.

It localises to the nucleus. Functionally, component of the Mediator complex, a coactivator involved in the regulated transcription of nearly all RNA polymerase II-dependent genes. Mediator functions as a bridge to convey information from gene-specific regulatory proteins to the basal RNA polymerase II transcription machinery. Mediator is recruited to promoters by direct interactions with regulatory proteins and serves as a scaffold for the assembly of a functional preinitiation complex with RNA polymerase II and the general transcription factors. Required for activated transcription of the MtnA, MtnB and MtnD genes. This Drosophila melanogaster (Fruit fly) protein is Mediator of RNA polymerase II transcription subunit 10 (MED10).